A 404-amino-acid chain; its full sequence is uncharacterized protein (404 aa).

The next 12 membrane-spanning stretches (helical) occupy residues 3-23 (IIAKIPAWMLLCLFTLSPITE), 43-63 (TTQITSSLYYLGFALGILTLG), 73-93 (PVVLFGLCIYAISSIISIFAP), 95-115 (IETLMLARFVQAFGVSVGSVI), 135-155 (SLSPWLLFIPSLGSSIGGYII), 162-182 (YTFVFFSLTGTVLLTLYCKIL), 216-236 (IIGAFNGIYYGFYIEAPFIFI), 248-268 (KLAFLLSFAGIFGGFLGGYLI), 280-300 (ILGLVFSVIGCSLLAIDALIL), 309-329 (IAVIMMFAPMMLHMVGHNLLI), 346-366 (TAGSVFGAIYYVLIAAVTFLV), and 377-397 (FALLFLVLSVSSAAAFYYILI).

The protein belongs to the major facilitator superfamily. Bcr/CmlA family.

The protein resides in the cell inner membrane. This is an uncharacterized protein from Rickettsia bellii (strain RML369-C).